A 341-amino-acid chain; its full sequence is UDP-3-O-acylglucosamine N-acyltransferase (341 aa).

Residue histidine 237 is the Proton acceptor of the active site.

It belongs to the transferase hexapeptide repeat family. LpxD subfamily. As to quaternary structure, homotrimer.

It carries out the reaction a UDP-3-O-[(3R)-3-hydroxyacyl]-alpha-D-glucosamine + a (3R)-hydroxyacyl-[ACP] = a UDP-2-N,3-O-bis[(3R)-3-hydroxyacyl]-alpha-D-glucosamine + holo-[ACP] + H(+). Its pathway is bacterial outer membrane biogenesis; LPS lipid A biosynthesis. Functionally, catalyzes the N-acylation of UDP-3-O-acylglucosamine using 3-hydroxyacyl-ACP as the acyl donor. Is involved in the biosynthesis of lipid A, a phosphorylated glycolipid that anchors the lipopolysaccharide to the outer membrane of the cell. This is UDP-3-O-acylglucosamine N-acyltransferase from Azoarcus sp. (strain BH72).